We begin with the raw amino-acid sequence, 617 residues long: Dihydroxy-acid dehydratase (617 aa).

Residue Asp81 coordinates Mg(2+). Residue Cys122 participates in [2Fe-2S] cluster binding. Mg(2+) contacts are provided by Asp123 and Lys124. The residue at position 124 (Lys124) is an N6-carboxylysine. Residue Cys195 coordinates [2Fe-2S] cluster. Glu491 provides a ligand contact to Mg(2+). The active-site Proton acceptor is the Ser517.

It belongs to the IlvD/Edd family. As to quaternary structure, homodimer. [2Fe-2S] cluster serves as cofactor. The cofactor is Mg(2+).

The catalysed reaction is (2R)-2,3-dihydroxy-3-methylbutanoate = 3-methyl-2-oxobutanoate + H2O. The enzyme catalyses (2R,3R)-2,3-dihydroxy-3-methylpentanoate = (S)-3-methyl-2-oxopentanoate + H2O. It functions in the pathway amino-acid biosynthesis; L-isoleucine biosynthesis; L-isoleucine from 2-oxobutanoate: step 3/4. It participates in amino-acid biosynthesis; L-valine biosynthesis; L-valine from pyruvate: step 3/4. Its function is as follows. Functions in the biosynthesis of branched-chain amino acids. Catalyzes the dehydration of (2R,3R)-2,3-dihydroxy-3-methylpentanoate (2,3-dihydroxy-3-methylvalerate) into 2-oxo-3-methylpentanoate (2-oxo-3-methylvalerate) and of (2R)-2,3-dihydroxy-3-methylbutanoate (2,3-dihydroxyisovalerate) into 2-oxo-3-methylbutanoate (2-oxoisovalerate), the penultimate precursor to L-isoleucine and L-valine, respectively. This is Dihydroxy-acid dehydratase from Buchnera aphidicola subsp. Schizaphis graminum (strain Sg).